Consider the following 487-residue polypeptide: Cytochrome P450 2C4 (487 aa).

Cys-432 lines the heme pocket.

It belongs to the cytochrome P450 family. The cofactor is heme.

Its subcellular location is the endoplasmic reticulum membrane. It is found in the microsome membrane. It carries out the reaction an organic molecule + reduced [NADPH--hemoprotein reductase] + O2 = an alcohol + oxidized [NADPH--hemoprotein reductase] + H2O + H(+). Cytochromes P450 are a group of heme-thiolate monooxygenases. In liver microsomes, this enzyme is involved in an NADPH-dependent electron transport pathway. It oxidizes a variety of structurally unrelated compounds, including steroids, fatty acids, and xenobiotics. This is Cytochrome P450 2C4 (CYP2C4) from Oryctolagus cuniculus (Rabbit).